The primary structure comprises 86 residues: Anti-adapter protein IraP (86 aa).

Residues 1–36 (MKNLIAELLFKLAQKEEESKELCAQVEALEIIVTAM) are a coiled coil.

This sequence belongs to the IraP family. In terms of assembly, interacts with RssB.

The protein resides in the cytoplasm. Its function is as follows. Inhibits RpoS proteolysis by regulating RssB activity, thereby increasing the stability of the sigma stress factor RpoS especially during phosphate starvation, but also in stationary phase and during nitrogen starvation. Its effect on RpoS stability is due to its interaction with RssB, which probably blocks the interaction of RssB with RpoS, and the consequent delivery of the RssB-RpoS complex to the ClpXP protein degradation pathway. The sequence is that of Anti-adapter protein IraP from Escherichia coli O7:K1 (strain IAI39 / ExPEC).